The following is a 417-amino-acid chain: Sterile alpha motif domain-containing protein 14 (417 aa).

2 disordered regions span residues 37 to 299 (LLAK…WQEA) and 388 to 417 (AAAE…AKKS). The segment covering 40 to 49 (KGRRHRPSRS) has biased composition (basic residues). Phosphoserine occurs at positions 84 and 108. The span at 135–153 (AAASCSPPRSAPSSDSSPS) shows a compositional bias: low complexity. Residues 160–173 (RAEPHSEDDSRDAS) show a composition bias toward basic and acidic residues. 2 positions are modified to phosphoserine: Ser-173 and Ser-179. 2 stretches are compositionally biased toward low complexity: residues 244–260 (SGKG…PTCS) and 276–295 (STLS…PSGP). Ser-279 bears the Phosphoserine mark. Thr-283 carries the phosphothreonine modification. The SAM domain occupies 326–389 (WTSQQVGQWL…KRKLKEMAAA (64 aa)). The stretch at 377–417 (ALVKRKLKEMAAAAEKERKAQEKAARQREKLRRREQEAKKS) forms a coiled coil. Residues 390–417 (AEKERKAQEKAARQREKLRRREQEAKKS) show a composition bias toward basic and acidic residues.

The polypeptide is Sterile alpha motif domain-containing protein 14 (SAMD14) (Homo sapiens (Human)).